Consider the following 899-residue polypeptide: Alanine--tRNA ligase, chloroplastic/mitochondrial (899 aa).

His-581, His-585, Cys-683, and His-687 together coordinate Zn(2+).

It belongs to the class-II aminoacyl-tRNA synthetase family. As to quaternary structure, monomer. It depends on Zn(2+) as a cofactor.

It is found in the plastid. Its subcellular location is the chloroplast. It localises to the mitochondrion. The enzyme catalyses tRNA(Ala) + L-alanine + ATP = L-alanyl-tRNA(Ala) + AMP + diphosphate. Its function is as follows. Catalyzes the attachment of alanine to tRNA(Ala) in a two-step reaction: alanine is first activated by ATP to form Ala-AMP and then transferred to the acceptor end of tRNA(Ala). Also edits incorrectly charged tRNA(Ala) via its editing domain. This is Alanine--tRNA ligase, chloroplastic/mitochondrial from Micromonas pusilla (strain CCMP1545) (Picoplanktonic green alga).